The sequence spans 240 residues: Biosynthetic peptidoglycan transglycosylase (240 aa).

Residues 16–36 form a helical membrane-spanning segment; it reads VLMALLCLFLIYELAMFSMVV.

Belongs to the glycosyltransferase 51 family.

Its subcellular location is the cell inner membrane. It carries out the reaction [GlcNAc-(1-&gt;4)-Mur2Ac(oyl-L-Ala-gamma-D-Glu-L-Lys-D-Ala-D-Ala)](n)-di-trans,octa-cis-undecaprenyl diphosphate + beta-D-GlcNAc-(1-&gt;4)-Mur2Ac(oyl-L-Ala-gamma-D-Glu-L-Lys-D-Ala-D-Ala)-di-trans,octa-cis-undecaprenyl diphosphate = [GlcNAc-(1-&gt;4)-Mur2Ac(oyl-L-Ala-gamma-D-Glu-L-Lys-D-Ala-D-Ala)](n+1)-di-trans,octa-cis-undecaprenyl diphosphate + di-trans,octa-cis-undecaprenyl diphosphate + H(+). Its pathway is cell wall biogenesis; peptidoglycan biosynthesis. Peptidoglycan polymerase that catalyzes glycan chain elongation from lipid-linked precursors. This chain is Biosynthetic peptidoglycan transglycosylase, found in Bordetella avium (strain 197N).